Consider the following 167-residue polypeptide: UPF0179 protein PAE0681 (167 aa).

The interval 142-167 (PSPSGSSISATSQGPSRAPPSRRLLK) is disordered. Positions 145-157 (SGSSISATSQGPS) are enriched in low complexity.

It belongs to the UPF0179 family.

This Pyrobaculum aerophilum (strain ATCC 51768 / DSM 7523 / JCM 9630 / CIP 104966 / NBRC 100827 / IM2) protein is UPF0179 protein PAE0681.